Consider the following 306-residue polypeptide: Palmitoyl-protein thioesterase ABHD10, mitochondrial (306 aa).

A mitochondrion-targeting transit peptide spans 1 to 52 (MAVARLAAVAAWVPCRSWGCAAVPFGPHRGLSALLARIPQRAPRWLPACRQK). The AB hydrolase-1 domain occupies 78–177 (IIFIPGYLSY…KVVALLGVAT (100 aa)). Catalysis depends on charge relay system residues S152, D249, and H279.

The protein belongs to the AB hydrolase superfamily.

The protein localises to the mitochondrion. It catalyses the reaction S-hexadecanoyl-L-cysteinyl-[protein] + H2O = L-cysteinyl-[protein] + hexadecanoate + H(+). It carries out the reaction mycophenolic acid O-acyl-beta-D-glucuronide + H2O = mycophenolate + D-glucuronate + H(+). With respect to regulation, inhibited by palmostatin-B. Functionally, acts as an acyl-protein thioesterase that hydrolyzes fatty acids from acylated residues in proteins. Regulates the mitochondrial S-depalmitoylation of the nucleophilic active site residue of peroxiredoxin-5/PRDX5, a key antioxidant protein, therefore modulating mitochondrial antioxidant ability. Also catalyzes the deglucuronidation of mycophenolic acid acyl-glucuronide, an active metabolite of the immunosuppressant drug mycophenolate. This chain is Palmitoyl-protein thioesterase ABHD10, mitochondrial (ABHD10), found in Pongo abelii (Sumatran orangutan).